Consider the following 631-residue polypeptide: Probable potassium transport system protein Kup 1 (631 aa).

12 helical membrane passes run 17-37, 55-75, 101-121, 140-160, 166-186, 217-237, 249-269, 277-297, 338-358, 370-390, 395-415, and 420-440; these read LALGALGVVFGDIGTSPLYAL, LSLIFWSLIIVVSFKYLMIIF, PLFYIVAIFGAGLLLGDGMLT, LYPYVLPIASVILVLLFSLQA, IGYLFGPLILIWFITIAILGI, FLLGGIFLVVTGGEALFADIG, FFIALPCLLLNYFGQGANLIV, PFFMIAPPWFYLPLIIIATVA, IYVPQINFILFIGTMAFCLAF, IAVNLEMLLVDAMVAYAAVSI, TFNVIFLFGLFLLIDLAFLGA, and FITGGWVPIVLAFVIAFIMYS.

It belongs to the HAK/KUP transporter (TC 2.A.72) family.

The protein resides in the cell inner membrane. It catalyses the reaction K(+)(in) + H(+)(in) = K(+)(out) + H(+)(out). Its function is as follows. Transport of potassium into the cell. Likely operates as a K(+):H(+) symporter. This is Probable potassium transport system protein Kup 1 from Legionella pneumophila (strain Corby).